Here is a 276-residue protein sequence, read N- to C-terminus: 4-hydroxy-tetrahydrodipicolinate reductase (276 aa).

NAD(+) contacts are provided by residues 10–15, Asp36, and 109–111; these read GALGKM and GTT. The active-site Proton donor/acceptor is His165. His166 is a (S)-2,3,4,5-tetrahydrodipicolinate binding site. Catalysis depends on Lys169, which acts as the Proton donor. 175-176 contacts (S)-2,3,4,5-tetrahydrodipicolinate; the sequence is GT.

Belongs to the DapB family.

The protein localises to the cytoplasm. It catalyses the reaction (S)-2,3,4,5-tetrahydrodipicolinate + NAD(+) + H2O = (2S,4S)-4-hydroxy-2,3,4,5-tetrahydrodipicolinate + NADH + H(+). The catalysed reaction is (S)-2,3,4,5-tetrahydrodipicolinate + NADP(+) + H2O = (2S,4S)-4-hydroxy-2,3,4,5-tetrahydrodipicolinate + NADPH + H(+). It functions in the pathway amino-acid biosynthesis; L-lysine biosynthesis via DAP pathway; (S)-tetrahydrodipicolinate from L-aspartate: step 4/4. In terms of biological role, catalyzes the conversion of 4-hydroxy-tetrahydrodipicolinate (HTPA) to tetrahydrodipicolinate. The polypeptide is 4-hydroxy-tetrahydrodipicolinate reductase (Prochlorococcus marinus (strain SARG / CCMP1375 / SS120)).